The primary structure comprises 400 residues: Egl nine homolog 1 (400 aa).

The residue at position 2 (Ala-2) is an N-acetylalanine. The required for nuclear export stretch occupies residues 6–20; the sequence is GGPGVLSASERDRQY. A Phosphoserine modification is found at Ser-12. Residues Cys-21, Cys-24, Cys-33, Cys-36, Cys-42, His-46, His-54, and Cys-58 each contribute to the Zn(2+) site. The segment at 21–58 adopts an MYND-type; atypical zinc-finger fold; that stretch reads CELCGKMENLLRCGRCRSSFYCCKEHQRQDWKKHKLVC. Over residues 62–74 the composition is skewed to low complexity; sequence EAPRAQPAPAQPR. The segment at 62–161 is disordered; it reads EAPRAQPAPA…PGGGLRPNGQ (100 aa). Ser-114 carries the phosphoserine modification. Gly residues predominate over residues 142–157; it reads AGGGPGEALSPGGGLR. An S-nitrosocysteine mark is found at Cys-178 and Cys-185. The tract at residues 218 to 228 is beta(2)beta(3) 'finger-like' loop; the sequence is VSQKSDSSKDI. Residues 271 to 369 form the Fe2OG dioxygenase domain; that stretch reads GRTKAMVACY…RYAITVWYFD (99 aa). Cys-279 carries the S-nitrosocysteine modification. Residues His-290 and Asp-292 each coordinate Fe cation. 2 positions are modified to S-nitrosocysteine: Cys-300 and Cys-303. His-351 is a Fe cation binding site. 2-oxoglutarate is bound at residue Arg-360.

In terms of assembly, monomer. Interacts with ING4; the interaction inhibits the hydroxylation of HIF alpha proteins. Interacts with PTGES3 (via PXLE motif); thereby recruiting EGLN1 to the HSP90 pathway to facilitate HIF alpha proteins hydroxylation. Interacts with LIMD1. Found in a complex composed of LIMD1, VHL, EGLN1/PHD2, ELOB and CUL2. Interacts with EPAS1. Interacts with CBFA2T3 and HIF1A. Requires Fe(2+) as cofactor. L-ascorbate is required as a cofactor. In terms of processing, S-nitrosylation inhibits the enzyme activity up to 60% under aerobic conditions. Chelation of Fe(2+) has no effect on the S-nitrosylation. It is uncertain whether nitrosylation occurs on Cys-300 or Cys-303. As to expression, expressed in heart, brain liver, skeletal muscle and kidney. Low levels were detected in the lung. Constitutively expressed during differentiation of C2C12 skeletal myocytes.

Its subcellular location is the cytoplasm. The protein localises to the nucleus. The catalysed reaction is L-prolyl-[hypoxia-inducible factor alpha subunit] + 2-oxoglutarate + O2 = trans-4-hydroxy-L-prolyl-[hypoxia-inducible factor alpha subunit] + succinate + CO2. In terms of biological role, cellular oxygen sensor that catalyzes, under normoxic conditions, the post-translational formation of 4-hydroxyproline in hypoxia-inducible factor (HIF) alpha proteins. Hydroxylates a specific proline found in each of the oxygen-dependent degradation (ODD) domains (N-terminal, NODD, and C-terminal, CODD) of HIF1A. Also hydroxylates HIF2A. Has a preference for the CODD site for both HIF1A and HIF1B. Hydroxylated HIFs are then targeted for proteasomal degradation via the von Hippel-Lindau ubiquitination complex. Under hypoxic conditions, the hydroxylation reaction is attenuated allowing HIFs to escape degradation resulting in their translocation to the nucleus, heterodimerization with HIF1B, and increased expression of hypoxy-inducible genes. EGLN1 is the most important isozyme under normoxia and, through regulating the stability of HIF1, involved in various hypoxia-influenced processes such as angiogenesis in retinal and cardiac functionality. Target proteins are preferentially recognized via a LXXLAP motif. The polypeptide is Egl nine homolog 1 (Egln1) (Mus musculus (Mouse)).